A 61-amino-acid polypeptide reads, in one-letter code: Large ribosomal subunit protein uL29 (61 aa).

This sequence belongs to the universal ribosomal protein uL29 family.

This chain is Large ribosomal subunit protein uL29, found in Xanthomonas campestris pv. campestris (strain 8004).